Consider the following 694-residue polypeptide: Maintenance of telomere capping protein 4 (694 aa).

The span at 1 to 12 (MTHTNEHDHKAE) shows a compositional bias: basic and acidic residues. The disordered stretch occupies residues 1–26 (MTHTNEHDHKAEQQQNGRGDTTTETV). Over residues 13–26 (QQQNGRGDTTTETV) the composition is skewed to polar residues. Ser-85 carries the post-translational modification Phosphoserine. A compositionally biased stretch (low complexity) spans 211-222 (YSPSNESSGSSS). Disordered stretches follow at residues 211 to 287 (YSPS…PEAQ), 325 to 437 (AKGS…TETY), and 465 to 511 (KTSN…PVGL). The span at 223-243 (SRRHHGHHIHPRRHLQHHSRV) shows a compositional bias: basic residues. A compositionally biased stretch (polar residues) spans 244–257 (RTANSVHSNTQSLT). The residue at position 263 (Thr-263) is a Phosphothreonine. Residues 276-287 (MITKIATTPEAQ) show a composition bias toward polar residues. Low complexity predominate over residues 403 to 417 (SNGGTSRRSSNNGES). Positions 418 to 437 (ISTNSSKSSMGITFGNTETY) are enriched in polar residues. Basic and acidic residues predominate over residues 471 to 485 (LRAEGEQALESDKEL). Phosphoserine is present on residues Ser-481 and Ser-491. Phosphotyrosine is present on Tyr-493. Residues 655–675 (RLLEFGIVLVLWTIWFLFSVL) form a helical membrane-spanning segment.

Its subcellular location is the membrane. The protein localises to the cytoplasm. The protein is Maintenance of telomere capping protein 4 (MTC4) of Saccharomyces cerevisiae (strain ATCC 204508 / S288c) (Baker's yeast).